The following is a 1086-amino-acid chain: NAD(P) transhydrogenase, mitochondrial (1086 aa).

The transit peptide at 1 to 43 (MANLLKTVVTGCSCPLLSNLGSCKGLRVKKDFLRTFYTHQELW) directs the protein to the mitochondrion. Over 44–474 (CKAPVKPGIP…TITPFRKTMS (431 aa)) the chain is Mitochondrial matrix. Lys-70 bears the N6-acetyllysine mark. Position 117 is an N6-succinyllysine (Lys-117). Position 182 to 184 (182 to 184 (RVT)) interacts with NAD(+). Residue Lys-224 is modified to N6-succinyllysine. NAD(+)-binding positions include Val-237, 257-259 (DTR), and Gly-287. Lys-294 is subject to N6-succinyllysine. NAD(+)-binding residues include Glu-300 and Leu-319. An N6-succinyllysine modification is found at Lys-331. Residue Lys-397 is modified to N6-acetyllysine. Transmembrane regions (helical) follow at residues 475–493 (TASAYTAGLTGILGLGIAA), 501–521 (MVTTFGLAGIVGYHTVWGVTP), 527–546 (LMSVTNAISGLTAVGGLALM), and 558–578 (GLAALAAFISSVNIAGGFLVT). Residues 579–595 (QRMLDMFKRPTDPPEYN) lie on the Mitochondrial matrix side of the membrane. 5 helical membrane passes run 596-616 (YLYLLPAGTFVGGYLAALYSG), 622-642 (IMYLGSGLCCVGALAGLSTQG), 646-666 (LGNALGMIGVAGGLAATLGVL), 672-691 (LLAQMSGAMALGGTIGLTIA), and 702-722 (LVAAFHSLVGLAAVLTCIAEY). Topologically, residues 723–739 (IIEYPHFATDAAANLTK) are cytoplasmic. 5 helical membrane-spanning segments follow: residues 740–760 (IVAYLGTYIGGVTFSGSLIAY), 778–797 (HLLNAGLLAASVGGIIPFMV), 801–819 (FTTGITCLGSVSALSAVMG), 833–853 (VVITVLNSYSGWALCAEGFLL), and 857–879 (LLTIVGALIGSSGAILSYIMCVA). At 880-1086 (MNRSLANVIL…QAKVRESYQK (207 aa)) the chain is on the mitochondrial matrix side. NADP(+) contacts are provided by residues Tyr-933, 965–970 (VAGRMP), 1007–1011 (GANDT), 1026–1027 (GM), 1042–1049 (KRSLGVGY), and 1068–1069 (DA). Lys-1079 bears the N6-succinyllysine mark.

In the N-terminal section; belongs to the AlaDH/PNT family. This sequence in the C-terminal section; belongs to the PNT beta subunit family. As to quaternary structure, homodimer. As to expression, widely expressed with expression most readily detectable in adrenal, heart, kidney, thyroid and adipose tissues.

It localises to the mitochondrion inner membrane. The catalysed reaction is NAD(+) + NADPH + H(+)(in) = NADH + NADP(+) + H(+)(out). The transhydrogenation between NADH and NADP is coupled to respiration and ATP hydrolysis and functions as a proton pump across the membrane. May play a role in reactive oxygen species (ROS) detoxification in the adrenal gland. The polypeptide is NAD(P) transhydrogenase, mitochondrial (NNT) (Homo sapiens (Human)).